A 114-amino-acid chain; its full sequence is MTQAKAIARTVRIAPRKVRLVVDLIRGKQVGEAVAILRHTPKAASPVVEKVLKSAVANAEHNYDLDINSLVVSEVFVDEGPTLKRFRPRAQGRASAINKRTSHITLVVSEKKEG.

This sequence belongs to the universal ribosomal protein uL22 family. As to quaternary structure, part of the 50S ribosomal subunit.

In terms of biological role, this protein binds specifically to 23S rRNA; its binding is stimulated by other ribosomal proteins, e.g. L4, L17, and L20. It is important during the early stages of 50S assembly. It makes multiple contacts with different domains of the 23S rRNA in the assembled 50S subunit and ribosome. The globular domain of the protein is located near the polypeptide exit tunnel on the outside of the subunit, while an extended beta-hairpin is found that lines the wall of the exit tunnel in the center of the 70S ribosome. This Lysinibacillus sphaericus (strain C3-41) protein is Large ribosomal subunit protein uL22.